Consider the following 193-residue polypeptide: Histone H5 (193 aa).

A compositionally biased stretch (pro residues) spans Thr-1–Ala-11. Disordered regions lie at residues Thr-1 to Tyr-29 and Gly-80 to Lys-193. Positions Lys-13–Ala-24 are enriched in basic residues. The H15 domain maps to Ser-25 to Lys-98. Basic residues predominate over residues Arg-104–Lys-193.

The protein belongs to the histone H1/H5 family. As to expression, erythroid cells.

It localises to the nucleus. The protein localises to the chromosome. Its function is as follows. Histone H5 performs the same function as H1, being necessary for the condensation of nucleosome chains into higher order structures, and replaces histone H1 in certain cells. The polypeptide is Histone H5 (Anser anser anser (Western greylag goose)).